Reading from the N-terminus, the 150-residue chain is uncharacterized protein (150 aa).

This is an uncharacterized protein from Azospirillum brasilense.